Here is a 216-residue protein sequence, read N- to C-terminus: MEMLPNQTIYINNLNEKIKKEELKKSLYAIFSQFGQILDIVALKTLKMRGQAFVIFKEIGSASNALRTMQGFPFYDKPMQIAYSKSDSDIVAKIKGTFKERPKKVKPPKPAPGTDEKKDKKKKPSSAENSNPNAQTEQPPNQILFLTNLPEETNEMMLSMLFNQFPGFKEVRLVPNRHDIAFVEFTTELQSNAAKEALQGFKITPTHAMKITFAKK.

2 consecutive RRM domains span residues glutamine 7 to serine 86 and glutamine 142 to lysine 216. Positions threonine 97 to glutamine 142 are disordered. Over residues serine 126–glutamine 142 the composition is skewed to polar residues.

This sequence belongs to the RRM U1 A/B'' family. As to quaternary structure, belongs to the spliceosome where it is associated with snRNP U1. Interacts with the SMN complex.

It is found in the nucleus. Binds stem loop II of U1 snRNA. It is the first snRNP to interact with pre-mRNA. This interaction is required for the subsequent binding of U2 snRNP and the U4/U6/U5 tri-snRNP. Plays a role in regulating sex-lethal splicing. In Drosophila melanogaster (Fruit fly), this protein is U1 small nuclear ribonucleoprotein A (snf).